Reading from the N-terminus, the 310-residue chain is GMP synthase [glutamine-hydrolyzing] subunit B (310 aa).

One can recognise a GMPS ATP-PPase domain in the interval 2–185 (FDAKSFIEES…LGLPEKIAHR (184 aa)). 29–35 (SGGVDSS) provides a ligand contact to ATP.

As to quaternary structure, heterodimer composed of a glutamine amidotransferase subunit (A) and a GMP-binding subunit (B).

The enzyme catalyses XMP + L-glutamine + ATP + H2O = GMP + L-glutamate + AMP + diphosphate + 2 H(+). The protein operates within purine metabolism; GMP biosynthesis; GMP from XMP (L-Gln route): step 1/1. Catalyzes the synthesis of GMP from XMP. This Methanococcus vannielii (strain ATCC 35089 / DSM 1224 / JCM 13029 / OCM 148 / SB) protein is GMP synthase [glutamine-hydrolyzing] subunit B.